The primary structure comprises 121 residues: Fluoride-specific ion channel FluC 2 (121 aa).

The next 4 helical transmembrane spans lie at 3 to 23, 31 to 51, 64 to 84, and 92 to 112; these read YLFI…LSFI, IGTF…GTLA, GITT…FELV, and FILL…LCFL. 2 residues coordinate Na(+): Gly-71 and Thr-74.

This sequence belongs to the fluoride channel Fluc/FEX (TC 1.A.43) family.

Its subcellular location is the cell membrane. It catalyses the reaction fluoride(in) = fluoride(out). Its activity is regulated as follows. Na(+) is not transported, but it plays an essential structural role and its presence is essential for fluoride channel function. In terms of biological role, fluoride-specific ion channel. Important for reducing fluoride concentration in the cell, thus reducing its toxicity. The chain is Fluoride-specific ion channel FluC 2 from Staphylococcus saprophyticus subsp. saprophyticus (strain ATCC 15305 / DSM 20229 / NCIMB 8711 / NCTC 7292 / S-41).